The sequence spans 347 residues: N-acetyl-gamma-glutamyl-phosphate reductase (347 aa).

Cysteine 152 is a catalytic residue.

Belongs to the NAGSA dehydrogenase family. Type 1 subfamily.

The protein resides in the cytoplasm. The enzyme catalyses N-acetyl-L-glutamate 5-semialdehyde + phosphate + NADP(+) = N-acetyl-L-glutamyl 5-phosphate + NADPH + H(+). The protein operates within amino-acid biosynthesis; L-arginine biosynthesis; N(2)-acetyl-L-ornithine from L-glutamate: step 3/4. Functionally, catalyzes the NADPH-dependent reduction of N-acetyl-5-glutamyl phosphate to yield N-acetyl-L-glutamate 5-semialdehyde. The chain is N-acetyl-gamma-glutamyl-phosphate reductase from Neisseria meningitidis serogroup C / serotype 2a (strain ATCC 700532 / DSM 15464 / FAM18).